A 245-amino-acid chain; its full sequence is 1-(5-phosphoribosyl)-5-[(5-phosphoribosylamino)methylideneamino] imidazole-4-carboxamide isomerase (245 aa).

D7 acts as the Proton acceptor in catalysis. D129 functions as the Proton donor in the catalytic mechanism.

Belongs to the HisA/HisF family.

The protein resides in the cytoplasm. The enzyme catalyses 1-(5-phospho-beta-D-ribosyl)-5-[(5-phospho-beta-D-ribosylamino)methylideneamino]imidazole-4-carboxamide = 5-[(5-phospho-1-deoxy-D-ribulos-1-ylimino)methylamino]-1-(5-phospho-beta-D-ribosyl)imidazole-4-carboxamide. It participates in amino-acid biosynthesis; L-histidine biosynthesis; L-histidine from 5-phospho-alpha-D-ribose 1-diphosphate: step 4/9. This is 1-(5-phosphoribosyl)-5-[(5-phosphoribosylamino)methylideneamino] imidazole-4-carboxamide isomerase from Escherichia coli O81 (strain ED1a).